The following is a 226-amino-acid chain: DnaJ homolog subfamily C member 30, mitochondrial (226 aa).

Residues 1-38 (MAAMRWRWWQRLLPWRLLQARGFPQNSAPSLGLGARTY) constitute a mitochondrion transit peptide. Residues 49–114 (ALYDLLGVPS…TLRRKYDRGL (66 aa)) enclose the J domain. The segment at 116-157 (SDEDLRGPGVRPSRTPAPDPGSPRTPPPTSRTHDGSRASPGA) is disordered. A compositionally biased stretch (pro residues) spans 130–144 (TPAPDPGSPRTPPPT). The chain crosses the membrane as a helical span at residues 208 to 225 (DTAAIFLIFSIFIIIGFY).

As to quaternary structure, associates with the ATP synthase complex. Interacts with MT-ATP6; interaction is direct. Interacts with ATP5MC2; interaction is direct. In terms of tissue distribution, expressed in brain, heart, kidney, liver, lung, spleen, stomach and testis. Highly expressed in the brain. In the neocortex, expressed in most, if not all, glutamatergic excitatory projection neurons (pyramidal) and many interneurons, with the strongest signal noticeably in large pyramidal neurons of layer 3C. Also present in pyramidal neurons of layer 3C PNs of the superior temporal cortex, as well as in pyramidal neurons (Betz cells) of the layer 5B primary motor cortex (at protein level).

It is found in the mitochondrion inner membrane. Functionally, mitochondrial protein enriched in neurons that acts as a regulator of mitochondrial respiration. Associates with the ATP synthase complex and facilitates ATP synthesis. May be a chaperone protein involved in the turnover of the subunits of mitochondrial complex I N-module. It facilitates the degradation of N-module subunits damaged by oxidative stress, and contributes to complex I functional efficiency. This Homo sapiens (Human) protein is DnaJ homolog subfamily C member 30, mitochondrial.